The sequence spans 636 residues: LEAF RUST 10 DISEASE-RESISTANCE LOCUS RECEPTOR-LIKE PROTEIN KINASE-like 1.5 (636 aa).

The N-terminal stretch at 1–26 (MSQPPWRCFSLLIFVLTIFSTKPSSA) is a signal peptide. Over 27–257 (STSCSSSFHC…NNKRVNHIAV (231 aa)) the chain is Extracellular. Asparagine 73, asparagine 102, asparagine 146, and asparagine 224 each carry an N-linked (GlcNAc...) asparagine glycan. Residues 258-278 (LSLIFALTCLLLVFSVAVAIF) traverse the membrane as a helical segment. Residues 279–636 (RSRRASFLSS…RVADDDVAKN (358 aa)) lie on the Cytoplasmic side of the membrane. In terms of domain architecture, Protein kinase spans 324–628 (FDPKRKIGDG…LRRIRSHTRV (305 aa)). ATP-binding positions include 330 to 338 (IGDGGFGSV) and lysine 352. Aspartate 458 serves as the catalytic Proton acceptor.

This sequence belongs to the protein kinase superfamily. Ser/Thr protein kinase family.

It localises to the cell membrane. The catalysed reaction is L-seryl-[protein] + ATP = O-phospho-L-seryl-[protein] + ADP + H(+). The enzyme catalyses L-threonyl-[protein] + ATP = O-phospho-L-threonyl-[protein] + ADP + H(+). The chain is LEAF RUST 10 DISEASE-RESISTANCE LOCUS RECEPTOR-LIKE PROTEIN KINASE-like 1.5 from Arabidopsis thaliana (Mouse-ear cress).